A 311-amino-acid chain; its full sequence is Acetyl-coenzyme A carboxylase carboxyl transferase subunit alpha (311 aa).

One can recognise a CoA carboxyltransferase C-terminal domain in the interval 36–286; sequence NLEKETQKVY…SDYVLKAIEE (251 aa).

Belongs to the AccA family. Acetyl-CoA carboxylase is a heterohexamer composed of biotin carboxyl carrier protein (AccB), biotin carboxylase (AccC) and two subunits each of ACCase subunit alpha (AccA) and ACCase subunit beta (AccD).

The protein resides in the cytoplasm. The enzyme catalyses N(6)-carboxybiotinyl-L-lysyl-[protein] + acetyl-CoA = N(6)-biotinyl-L-lysyl-[protein] + malonyl-CoA. The protein operates within lipid metabolism; malonyl-CoA biosynthesis; malonyl-CoA from acetyl-CoA: step 1/1. Component of the acetyl coenzyme A carboxylase (ACC) complex. First, biotin carboxylase catalyzes the carboxylation of biotin on its carrier protein (BCCP) and then the CO(2) group is transferred by the carboxyltransferase to acetyl-CoA to form malonyl-CoA. The sequence is that of Acetyl-coenzyme A carboxylase carboxyl transferase subunit alpha from Campylobacter lari (strain RM2100 / D67 / ATCC BAA-1060).